The chain runs to 138 residues: Flagellar basal body rod protein FlgB (138 aa).

It belongs to the flagella basal body rod proteins family. As to quaternary structure, the basal body constitutes a major portion of the flagellar organelle and consists of a number of rings mounted on a central rod. In Gram-negative bacteria, at least four rings, L, P, S and M are present, whereas Gram-positive bacteria lack the L and P rings. The rod consists of about 26 subunits of FlgG in the distal portion, and FlgB, FlgC and FlgF build up the proximal portion of the rod with about 6 subunits each. Rod assembly occurs by export via the flagellum-specific pathway of its constituent proteins and by their incorporation into the rod structure in the probable order of FlgB, FlgC, FlgF and FlgG. Another protein, FliE, also assembles onto the stable rod structure.

The protein resides in the bacterial flagellum basal body. In terms of biological role, structural component of flagellum, the bacterial motility apparatus. Part of the rod structure of flagellar basal body. This is Flagellar basal body rod protein FlgB (flgB) from Escherichia coli (strain K12).